The sequence spans 75 residues: Caerin 1.11 (75 aa).

The first 22 residues, 1–22 (MASLKKSLFLVLFLGFVSVSIC), serve as a signal peptide directing secretion. The propeptide occupies 23 to 49 (EEEKRQEDEDEHEEEGENQEEGSEEKR). Residues 24–48 (EEKRQEDEDEHEEEGENQEEGSEEK) form a disordered region. Residues 30–45 (DEDEHEEEGENQEEGS) show a composition bias toward acidic residues. Leu-74 carries the leucine amide modification.

It belongs to the frog skin active peptide (FSAP) family. Caerin subfamily. As to expression, expressed by the skin glands.

It is found in the secreted. The protein resides in the target cell membrane. Its function is as follows. Cationic amphipathic alpha-helical antimicrobial peptide with weak or no activity against both Gram-positive and Gram-negative bacteria. Is weakly active against E.coli (MIC=25 uM), E.cloacae (MIC=50 uM), K.pneumoniae (MIC=25 uM), and S.haemolyticus (MIC=50 uM). Has no activity against S.typhimurium, S.enteritidis, B.megaterium, and S.aureus (MIC&gt;100 uM). The sequence is that of Caerin 1.11 from Ranoidea caerulea (Green tree frog).